Reading from the N-terminus, the 174-residue chain is Co-chaperone protein HscB homolog (174 aa).

Residues 2 to 74 (NYFELFSLLP…IQRAEHLLAL (73 aa)) enclose the J domain.

The protein belongs to the HscB family. As to quaternary structure, interacts with HscA and stimulates its ATPase activity.

Its function is as follows. Co-chaperone involved in the maturation of iron-sulfur cluster-containing proteins. Seems to help targeting proteins to be folded toward HscA. The sequence is that of Co-chaperone protein HscB homolog from Shewanella pealeana (strain ATCC 700345 / ANG-SQ1).